The sequence spans 453 residues: Wall-associated protein (453 aa).

The first 29 residues, 1–29, serve as a signal peptide directing secretion; it reads MKMKRKLLSLVSVLTILLGAFWVTKIVKA. The interval 331–403 is disordered; that stretch reads GRASSRVKRQ…TASQTNVPTT (73 aa). The segment covering 342-403 has biased composition (low complexity); it reads ETTTVTETTT…TASQTNVPTT (62 aa). The LPXTG sorting signal signature appears at 422-426; the sequence is LPSTG. At Thr-425 the chain carries Pentaglycyl murein peptidoglycan amidated threonine. The propeptide at 426 to 453 is removed by sortase; the sequence is GEQAGLLLTTVGLVIVAVAGVYFYRTRR.

It localises to the secreted. The protein localises to the cell wall. The sequence is that of Wall-associated protein (wapA) from Streptococcus mutans serotype c (strain ATCC 700610 / UA159).